The chain runs to 338 residues: tRNA-specific 2-thiouridylase MnmA (338 aa).

ATP-binding positions include Ala6 to Ser13 and Met32. The active-site Nucleophile is the Cys92. Cysteines 92 and 186 form a disulfide. Gly116 contributes to the ATP binding site. The interaction with tRNA stretch occupies residues Lys134–Gln136. The Cysteine persulfide intermediate role is filled by Cys186. Positions Arg288–Tyr289 are interaction with tRNA.

The protein belongs to the MnmA/TRMU family.

It localises to the cytoplasm. It catalyses the reaction S-sulfanyl-L-cysteinyl-[protein] + uridine(34) in tRNA + AH2 + ATP = 2-thiouridine(34) in tRNA + L-cysteinyl-[protein] + A + AMP + diphosphate + H(+). Catalyzes the 2-thiolation of uridine at the wobble position (U34) of tRNA, leading to the formation of s(2)U34. In Campylobacter jejuni subsp. jejuni serotype O:2 (strain ATCC 700819 / NCTC 11168), this protein is tRNA-specific 2-thiouridylase MnmA.